Reading from the N-terminus, the 248-residue chain is Metallo-beta-lactamase type 2 (248 aa).

Positions 1 to 21 are cleaved as a signal peptide; sequence MKGLKGLLVLALGFTGLQVFG. Zn(2+)-binding residues include histidine 97, histidine 99, aspartate 101, histidine 160, and cysteine 179. Residue lysine 182 participates in substrate binding. Position 221 (histidine 221) interacts with Zn(2+).

The protein belongs to the metallo-beta-lactamase superfamily. Class-B beta-lactamase family. In terms of assembly, monomer. The cofactor is Zn(2+).

The protein localises to the periplasm. The catalysed reaction is a beta-lactam + H2O = a substituted beta-amino acid. In terms of biological role, confers resistance to the different beta-lactams antibiotics (penicillin, cephalosporin and carbapenem) via the hydrolysis of the beta-lactam ring. This Elizabethkingia meningoseptica (Chryseobacterium meningosepticum) protein is Metallo-beta-lactamase type 2 (blaB7).